The sequence spans 948 residues: UvrABC system protein A (948 aa).

33 to 40 contacts ATP; sequence GLSGSGKS. A C4-type zinc finger spans residues 252 to 279; it reads CPICGFSIGELEPRMFSFNSPFGACPTC. 2 consecutive ABC transporter domains span residues 309-587 and 607-935; these read WIPT…KKSL and ASDR…KYLK. 639–646 is an ATP binding site; it reads GVSGSGKS. A C4-type zinc finger spans residues 738–764; that stretch reads CEACKGDGIIKIEMHFLPDVYVPCEVC.

The protein belongs to the ABC transporter superfamily. UvrA family. Forms a heterotetramer with UvrB during the search for lesions.

Its subcellular location is the cytoplasm. Its function is as follows. The UvrABC repair system catalyzes the recognition and processing of DNA lesions. UvrA is an ATPase and a DNA-binding protein. A damage recognition complex composed of 2 UvrA and 2 UvrB subunits scans DNA for abnormalities. When the presence of a lesion has been verified by UvrB, the UvrA molecules dissociate. In Staphylococcus aureus (strain N315), this protein is UvrABC system protein A.